Reading from the N-terminus, the 529-residue chain is uncharacterized protein (529 aa).

The interval 1–20 is disordered; sequence MGADLKQPQDADSPPKGVSR. Residues 1–52 constitute a signal peptide (tat-type signal); it reads MGADLKQPQDADSPPKGVSRRRFLTTGAAAVVGTGVGAGGTALLSSHPRGPA.

Post-translationally, predicted to be exported by the Tat system. The position of the signal peptide cleavage has not been experimentally proven.

This is an uncharacterized protein from Mycobacterium tuberculosis (strain CDC 1551 / Oshkosh).